Consider the following 3707-residue polypeptide: Basement membrane-specific heparan sulfate proteoglycan core protein (3707 aa).

An N-terminal signal peptide occupies residues 1–21; sequence MGQRAVGSLLLGLLLHARLLA. O-linked (Xyl...) (heparan sulfate) serine glycans are attached at residues Ser-65, Ser-71, and Ser-76. The region spanning 80-191 is the SEA domain; it reads QMVYFRALVN…WGFKFRRLGT (112 aa). The N-linked (GlcNAc...) asparagine glycan is linked to Asn-89. 4 consecutive LDL-receptor class A domains span residues 195-234, 281-319, 320-359, and 360-403; these read FPRVCTETEFACHSYNECVALEYRCDRRPDCRDMSDELNC, GPSACGPQEASCHSGHCIPRDYLCDGQEDCRDGSDELGC, ASPPPCEPNEFACENGHCALKLWRCDGDFDCEDRTDEANC, and SVKQ…EFGC. 13 disulfide bridges follow: Cys-199–Cys-212, Cys-206–Cys-225, Cys-219–Cys-234, Cys-285–Cys-297, Cys-292–Cys-310, Cys-304–Cys-319, Cys-325–Cys-337, Cys-332–Cys-350, Cys-344–Cys-359, Cys-368–Cys-381, Cys-375–Cys-394, Cys-388–Cys-403, and Cys-428–Cys-479. Residue Asn-358 is glycosylated (N-linked (GlcNAc...) asparagine). The 101-residue stretch at 404 to 504 folds into the Ig-like C2-type 1 domain; it reads MPPQVVTPPQ…VLELVPQRGP (101 aa). In terms of domain architecture, Laminin EGF-like 1; first part spans 521–530; that stretch reads CFCFGVTNVC. The 193-residue stretch at 538 to 730 folds into the Laminin IV type A 1 domain; the sequence is DQIRLSFDQP…IHGRAHSVEE (193 aa). A glycan (N-linked (GlcNAc...) asparagine) is linked at Asn-554. The Laminin EGF-like 1; second part domain occupies 731 to 763; the sequence is CRCPIGYSGLSCESCDAHFTRVPGGPYLGTCSG. 11 disulfides stabilise this stretch: Cys-764/Cys-773, Cys-766/Cys-780, Cys-783/Cys-792, Cys-795/Cys-811, Cys-814/Cys-829, Cys-816/Cys-839, Cys-842/Cys-851, Cys-854/Cys-869, Cys-879/Cys-892, Cys-894/Cys-903, and Cys-906/Cys-921. Laminin EGF-like domains follow at residues 764–813 and 814–871; these read CNCN…ACRP and CPCP…KCRP. The Laminin EGF-like 4; truncated domain occupies 879–923; sequence CDERGSLGTSGETCRCKNNVVGRLCNECSDGSFHLSKQNPDGCLK. One can recognise a Laminin EGF-like 5; first part domain in the interval 924–933; that stretch reads CFCMGVSRQC. A Laminin IV type A 2 domain is found at 941 to 1125; sequence AQVLGASEQP…GQDSAREVEQ (185 aa). A Laminin EGF-like 5; second part domain is found at 1126–1158; sequence CTCPPGYRGPSCQDCDTGYTRVPSGLYLGTCER. 12 cysteine pairs are disulfide-bonded: Cys-1159–Cys-1168, Cys-1161–Cys-1175, Cys-1178–Cys-1187, Cys-1190–Cys-1206, Cys-1209–Cys-1224, Cys-1211–Cys-1234, Cys-1237–Cys-1246, Cys-1249–Cys-1263, Cys-1275–Cys-1287, Cys-1277–Cys-1293, Cys-1295–Cys-1304, and Cys-1307–Cys-1322. Laminin EGF-like domains are found at residues 1159–1208, 1209–1265, and 1275–1324; these read CNCH…DCQP, CPCY…PCHR, and CGCD…GCLP. The Laminin EGF-like 9; first part domain occupies 1325 to 1334; it reads CFCMGVTQQC. One can recognise a Laminin IV type A 3 domain in the interval 1344-1529; that stretch reads ISTHFAPGDF…SGPRALEVEE (186 aa). The Laminin EGF-like 9; second part domain occupies 1530–1562; sequence CRCPPGYVGLSCQDCAPGYTRTGSGLYLGQCEL. Cystine bridges form between Cys-1563/Cys-1572, Cys-1565/Cys-1579, Cys-1582/Cys-1591, Cys-1594/Cys-1610, Cys-1613/Cys-1628, Cys-1615/Cys-1638, Cys-1641/Cys-1650, and Cys-1653/Cys-1668. Laminin EGF-like domains follow at residues 1563–1612 and 1613–1670; these read CECN…DCQP and CACP…RCQP. Ig-like C2-type domains follow at residues 1677 to 1771, 1772 to 1865, 1866 to 1954, 1955 to 2049, 2050 to 2148, 2149 to 2244, 2245 to 2343, 2344 to 2436, 2437 to 2532, 2533 to 2619, 2620 to 2720, 2721 to 2809, 2810 to 2895, and 2896 to 2980; these read EVQI…KPIM, VTVE…STAP, VASI…GGSG, PRVQ…PAPA, SPAP…PGVV, PPIR…PAPG, LAQP…RLRS, PVIS…PPTV, SVLP…APGT, PQVQ…VESP, PYAT…GGST, PTVQ…ALPS, VLIN…LVQA, and LPQI…LQVP. The segment at 1713–1733 is disordered; that stretch reads DGRPLPSSAQQRHQGSELHFP. Cystine bridges form between Cys-1792–Cys-1839, Cys-1886–Cys-1932, and Cys-1976–Cys-2021. A disordered region spans residues 2039–2061; the sequence is SPSTNSPPAPASPAPIRIESSSS. The segment covering 2052-2061 has biased composition (low complexity); the sequence is APIRIESSSS. 3 disulfide bridges follow: Cys-2073–Cys-2118, Cys-2170–Cys-2215, and Cys-2268–Cys-2313. N-linked (GlcNAc...) asparagine glycans are attached at residues Asn-2336, Asn-2394, and Asn-2427. Cys-2365 and Cys-2413 are disulfide-bonded. 2 disulfides stabilise this stretch: Cys-2456–Cys-2506 and Cys-2554–Cys-2599. N-linked (GlcNAc...) asparagine glycosylation occurs at Asn-2600. A disulfide bond links Cys-2641 and Cys-2686. Intrachain disulfides connect Cys-2831–Cys-2876 and Cys-2917–Cys-2962. Residues 2984–3162 enclose the Laminin G-like 1 domain; that stretch reads IPYFTQTPYS…VNLTTHGISH (179 aa). Residues Asn-3098 and Asn-3154 are each glycosylated (N-linked (GlcNAc...) asparagine). Intrachain disulfides connect Cys-3137–Cys-3163, Cys-3166–Cys-3177, Cys-3171–Cys-3187, Cys-3204–Cys-3216, and Cys-3229–Cys-3238. Positions 3163 to 3241 constitute an EGF-like domain; sequence CPTCQDRPCQ…GRSGVRCEEG (79 aa). The Laminin G-like 2 domain occupies 3245 to 3425; the sequence is TTPSMSGAGS…VGQCYDSSPC (181 aa). A glycan (N-linked (GlcNAc...) asparagine) is linked at Asn-3385. 7 disulfides stabilise this stretch: Cys-3393–Cys-3419, Cys-3425–Cys-3436, Cys-3430–Cys-3446, Cys-3448–Cys-3457, Cys-3464–Cys-3476, Cys-3470–Cys-3481, and Cys-3483–Cys-3492. O-linked (Xyl...) (chondroitin sulfate) serine glycosylation occurs at Ser-3510. The 188-residue stretch at 3518 to 3705 folds into the Laminin G-like 3 domain; the sequence is QYGAYFYDNG…AQAGANTRPC (188 aa). Ca(2+) is bound by residues Asp-3574 and Leu-3591. The interval 3615-3617 is mediates motor neuron attachment; the sequence is LRE. Ala-3641 and Asn-3643 together coordinate Ca(2+). Cysteines 3671 and 3705 form a disulfide. The interval 3680 to 3707 is disordered; it reads ARPGAPPPQPLDLQHRAQAGANTRPCPS.

In terms of assembly, has a strong tendency to aggregate in dimers or stellate structures. Interacts with other basement membrane components such as laminin, prolargin and collagen type IV. Interacts with COL13A1. Interacts with FGFBP1. Interacts with VWA1. Interacts (via C-terminus) with ECM1 (via C-terminus). Interacts with SVEP1. Proteolytic processing produces the C-terminal angiogenic peptide, endorepellin. This peptide can be further processed to produce the LG3 peptide. In terms of processing, O-glycosylated. Contains three heparan sulfate chains. Also contains chondroitin sulfate.

It is found in the secreted. It localises to the extracellular space. Its subcellular location is the extracellular matrix. The protein resides in the basement membrane. In terms of biological role, integral component of basement membranes. Component of the glomerular basement membrane (GBM), responsible for the fixed negative electrostatic membrane charge, and which provides a barrier which is both size- and charge-selective. It serves as an attachment substrate for cells. Plays essential roles in vascularization. Critical for normal heart development and for regulating the vascular response to injury. Also required for avascular cartilage development. Anti-angiogenic and anti-tumor peptide that inhibits endothelial cell migration, collagen-induced endothelial tube morphogenesis and blood vessel growth in the chorioallantoic membrane. Blocks endothelial cell adhesion to fibronectin and type I collagen. Anti-tumor agent in neovascularization. Interaction with its ligand, integrin alpha2/beta1, is required for the anti-angiogenic properties. Evokes a reduction in phosphorylation of receptor tyrosine kinases via alpha2/beta1 integrin-mediated activation of the tyrosine phosphatase, PTPN6. Its function is as follows. Has anti-angiogenic properties that require binding of calcium ions for full activity. This chain is Basement membrane-specific heparan sulfate proteoglycan core protein (Hspg2), found in Mus musculus (Mouse).